Consider the following 162-residue polypeptide: Phenazine biosynthesis protein PhzA1 (162 aa).

It belongs to the PhzA/PhzB family.

The protein operates within antibiotic biosynthesis; phenazine biosynthesis. Functionally, involved in the biosynthesis of the antibiotic phenazine, a nitrogen-containing heterocyclic molecule. PhzA1 (operon phzA1B1C1E1F1G1) has a role in the biosynthesis of the phenazine during planktonic growth. This chain is Phenazine biosynthesis protein PhzA1, found in Pseudomonas aeruginosa (strain ATCC 15692 / DSM 22644 / CIP 104116 / JCM 14847 / LMG 12228 / 1C / PRS 101 / PAO1).